Reading from the N-terminus, the 1487-residue chain is Probable serine/threonine-protein kinase roco11 (1487 aa).

Positions 108–134 are disordered; sequence TQPSSSHNHSNHHHHHHQQQLQQQQQQ. Over residues 116–125 the composition is skewed to basic residues; the sequence is HSNHHHHHHQ. LRR repeat units follow at residues 295–316, 318–340, and 341–362; these read NLAE…ICQL, HLKI…ANLT, and NLKY…IIEQ. The 186-residue stretch at 379-564 folds into the Roc domain; the sequence is KSETWNKVKL…KILTNEAEKS (186 aa). Residues 379-564 form a small GTPase-like region; sequence KSETWNKVKL…KILTNEAEKS (186 aa). GTP contacts are provided by residues 392–399, 448–452, and 507–510; these read GQEGVGKS, DFGGQ, and THCD. The 195-residue stretch at 678–872 folds into the COR domain; sequence VNQKYIDYND…KTYWANGILL (195 aa). The interval 891–1007 is disordered; the sequence is SILPNNSSST…NNNNNNNNNI (117 aa). Residues 897–931 show a composition bias toward low complexity; it reads SSSTSSSTSSSTSSSTSSSSSSSTSSSSTSTTTTT. The span at 932-950 shows a compositional bias: polar residues; it reads VQIQSSPFGNSTTIVNKLT. Residues 951–1007 show a composition bias toward low complexity; it reads NIDNNNNNNNNNNNNNNNNNNINNNNNNNNNNNNNNNNNNNNNNNNNNNNNNNNNNI. Residues 1185–1452 form the Protein kinase domain; the sequence is VVCEEQIGVG…YIVKELTNFY (268 aa). ATP contacts are provided by residues 1191-1199 and K1216; that span reads IGVGGFGLV. D1313 serves as the catalytic Proton acceptor. Positions 1464-1487 are disordered; it reads KSINDKSPHPDLISNGVPKLQIAK.

It belongs to the protein kinase superfamily. TKL Ser/Thr protein kinase family. ROCO subfamily.

It carries out the reaction L-seryl-[protein] + ATP = O-phospho-L-seryl-[protein] + ADP + H(+). The catalysed reaction is L-threonyl-[protein] + ATP = O-phospho-L-threonyl-[protein] + ADP + H(+). The protein is Probable serine/threonine-protein kinase roco11 (roco11) of Dictyostelium discoideum (Social amoeba).